Consider the following 426-residue polypeptide: Serine hydroxymethyltransferase (426 aa).

(6S)-5,6,7,8-tetrahydrofolate is bound by residues L111 and 115-117 (GHL). K220 carries the post-translational modification N6-(pyridoxal phosphate)lysine.

Belongs to the SHMT family. Homodimer. The cofactor is pyridoxal 5'-phosphate.

It localises to the cytoplasm. It carries out the reaction (6R)-5,10-methylene-5,6,7,8-tetrahydrofolate + glycine + H2O = (6S)-5,6,7,8-tetrahydrofolate + L-serine. The protein operates within one-carbon metabolism; tetrahydrofolate interconversion. It participates in amino-acid biosynthesis; glycine biosynthesis; glycine from L-serine: step 1/1. Catalyzes the reversible interconversion of serine and glycine with tetrahydrofolate (THF) serving as the one-carbon carrier. This reaction serves as the major source of one-carbon groups required for the biosynthesis of purines, thymidylate, methionine, and other important biomolecules. Also exhibits THF-independent aldolase activity toward beta-hydroxyamino acids, producing glycine and aldehydes, via a retro-aldol mechanism. The polypeptide is Serine hydroxymethyltransferase (Orientia tsutsugamushi (strain Ikeda) (Rickettsia tsutsugamushi)).